The primary structure comprises 400 residues: 1-deoxy-D-xylulose 5-phosphate reductoisomerase (400 aa).

Residues threonine 10, glycine 11, serine 12, isoleucine 13, glycine 36, asparagine 38, and asparagine 124 each contribute to the NADPH site. Lysine 125 is a binding site for 1-deoxy-D-xylulose 5-phosphate. Glutamate 126 is a binding site for NADPH. Aspartate 150 serves as a coordination point for Mn(2+). Residues serine 151, glutamate 152, serine 186, and histidine 209 each coordinate 1-deoxy-D-xylulose 5-phosphate. Glutamate 152 serves as a coordination point for Mn(2+). Position 215 (glycine 215) interacts with NADPH. Residues serine 222, asparagine 227, lysine 228, and glutamate 231 each contribute to the 1-deoxy-D-xylulose 5-phosphate site. Glutamate 231 is a binding site for Mn(2+).

It belongs to the DXR family. The cofactor is Mg(2+). Requires Mn(2+) as cofactor.

It carries out the reaction 2-C-methyl-D-erythritol 4-phosphate + NADP(+) = 1-deoxy-D-xylulose 5-phosphate + NADPH + H(+). It participates in isoprenoid biosynthesis; isopentenyl diphosphate biosynthesis via DXP pathway; isopentenyl diphosphate from 1-deoxy-D-xylulose 5-phosphate: step 1/6. Functionally, catalyzes the NADPH-dependent rearrangement and reduction of 1-deoxy-D-xylulose-5-phosphate (DXP) to 2-C-methyl-D-erythritol 4-phosphate (MEP). In Aliivibrio salmonicida (strain LFI1238) (Vibrio salmonicida (strain LFI1238)), this protein is 1-deoxy-D-xylulose 5-phosphate reductoisomerase.